The chain runs to 578 residues: Arginine--tRNA ligase (578 aa).

A 'HIGH' region motif is present at residues 127 to 137; it reads PNLAKEMHVGH.

It belongs to the class-I aminoacyl-tRNA synthetase family. Monomer.

Its subcellular location is the cytoplasm. The catalysed reaction is tRNA(Arg) + L-arginine + ATP = L-arginyl-tRNA(Arg) + AMP + diphosphate. This Pseudomonas fluorescens (strain SBW25) protein is Arginine--tRNA ligase.